We begin with the raw amino-acid sequence, 140 residues long: Nucleoside diphosphate kinase (140 aa).

ATP is bound by residues K9, F57, R85, T91, R102, and N112. The Pros-phosphohistidine intermediate role is filled by H115.

It belongs to the NDK family. Homotetramer. Mg(2+) is required as a cofactor.

The protein localises to the cytoplasm. The enzyme catalyses a 2'-deoxyribonucleoside 5'-diphosphate + ATP = a 2'-deoxyribonucleoside 5'-triphosphate + ADP. The catalysed reaction is a ribonucleoside 5'-diphosphate + ATP = a ribonucleoside 5'-triphosphate + ADP. Major role in the synthesis of nucleoside triphosphates other than ATP. The ATP gamma phosphate is transferred to the NDP beta phosphate via a ping-pong mechanism, using a phosphorylated active-site intermediate. The sequence is that of Nucleoside diphosphate kinase from Chlorobium chlorochromatii (strain CaD3).